The chain runs to 296 residues: Cleavage and polyadenylation specificity factor subunit 4 (296 aa).

5 consecutive C3H1-type zinc fingers follow at residues 35-63, 64-91, 92-119, 120-147, and 149-171; these read KSIAAVCNFITRNGQECDKGSACPFRHIR, GDRTIVCKHWLRGLCKKGDQCEFLHEYD, MTKMPECYFYSRFNACHNKECPFLHIDP, QSKVKDCPWYKRGFCRHGPHCRHQHLRR, and LCMDYLAGFCPEGPSCKHMHPHF. Residues 189 to 206 form a CCHC-type 1 zinc finger; sequence PTCHYCGELGHKANSCKQ. The tract at residues 222–254 is disordered; that stretch reads HSGGHSGGYSGHSGHIEGADDMQSNHHSQPHGP. A CCHC-type 2 zinc finger spans residues 266–283; it reads ITCYKCGNKGHYANKCPK.

Component of the cleavage and polyadenylation specificity factor (CPSF) complex, composed of at least Clp, Cpsf73, Cpsf100 and Cpsf160. During oogenesis, expression is detected in the germarium, in nurse cells, in the oocyte, and in the somatically derived follicular epithelial cells (at protein level). At oogenesis stage 12, nurse cells degenerate and their content is transferred into the oocyte. In larvae, expressed in all organs and disks (at protein level). In the larval salivary gland, expression is initially confined to cells at the anterior end but later expands throughout the entire gland (at protein level).

The protein localises to the nucleus. Functionally, component of the cleavage and polyadenylation specificity factor (CPSF) complex that plays a key role in pre-mRNA 3'-end formation, recognizing the AAUAAA signal sequence and interacting with poly(A) polymerase and other factors to bring about cleavage and poly(A) addition. Has endonuclease activity. Binds RNA polymers with a preference for G- and/or C-rich clusters. Binds single-stranded DNA non-specifically. This chain is Cleavage and polyadenylation specificity factor subunit 4 (Clp), found in Drosophila melanogaster (Fruit fly).